Reading from the N-terminus, the 321-residue chain is Nucleus-vacuole junction protein 1 (321 aa).

The first 22 residues, 1 to 22, serve as a signal peptide directing secretion; sequence MTRPPLVRGIFSLGLSVAVLKG. The interval 73-125 is TSC13-binding; the sequence is ELSWRKVFNFISRQSSELDARIYVLILLLSFLLPIAWTVLDGDRETTLEDKDN. Residues 94 to 114 form a helical membrane-spanning segment; the sequence is IYVLILLLSFLLPIAWTVLDG. The interval 139-195 is OSH1-binding; that stretch reads KHYNDGERAVLQFGKNRSEPIILSYKDMNVLEGEHEFTSKEEHSNSHLTSKSENALS. Ser156 is subject to Phosphoserine. Positions 174–183 are enriched in basic and acidic residues; the sequence is EFTSKEEHSN. The disordered stretch occupies residues 174–194; it reads EFTSKEEHSNSHLTSKSENAL. Over residues 184–194 the composition is skewed to polar residues; that stretch reads SHLTSKSENAL. Residue Ser199 is modified to Phosphoserine. The disordered stretch occupies residues 210–275; the sequence is QLEEDKNEPN…SLKSSTSFPI (66 aa). The VAC8-binding stretch occupies residues 233-321; it reads DCSSSSEVES…EQAYSQPFRY (89 aa). Positions 242 to 262 are enriched in basic and acidic residues; sequence SQSKCRKESTAEPDSLSRDTR. Residues 263 to 272 are compositionally biased toward low complexity; sequence TTSSLKSSTS. A phosphoserine mark is found at Ser285 and Ser298. A disordered region spans residues 299 to 321; the sequence is PTKSSNLDAQVNTEQAYSQPFRY.

In terms of assembly, interacts with OSH1, TSC13 and VAC8.

It localises to the nucleus outer membrane. Involved in the formation of nucleus-vacuole (NV) junctions during piecemeal microautophagy of the nucleus (PMN). NV junctions are interorganelle interfaces mediated by NVJ1 in the nuclear envelope and VAC8 on the vacuole membrane. Together, NVJ1 and VAC8 form Velcro-like patches through which teardrop-like portions of the nucleus are pinched off into the vacuolar lumen and degraded by the PMN process. Also acts as an outer-nuclear membrane receptor for OSH1 and TSC13. This Saccharomyces cerevisiae (strain YJM789) (Baker's yeast) protein is Nucleus-vacuole junction protein 1 (NVJ1).